A 1219-amino-acid chain; its full sequence is ATP-dependent helicase/nuclease subunit A (1219 aa).

The UvrD-like helicase ATP-binding domain maps to 12–477; it reads TRWTDNQWKS…IDLSQNFRSR (466 aa). 33–40 contributes to the ATP binding site; sequence AAAGSGKT. The UvrD-like helicase C-terminal domain maps to 478-786; the sequence is EEVLTTTNYL…RMMTIHSSKG (309 aa). The interval 997 to 1016 is disordered; the sequence is PSKQSVSELKRQHETEQSDT. Residues 1004 to 1016 show a composition bias toward basic and acidic residues; it reads ELKRQHETEQSDT.

The protein belongs to the helicase family. AddA subfamily. Heterodimer of AddA and AddB/RexB. Mg(2+) is required as a cofactor.

It carries out the reaction Couples ATP hydrolysis with the unwinding of duplex DNA by translocating in the 3'-5' direction.. It catalyses the reaction ATP + H2O = ADP + phosphate + H(+). Functionally, the heterodimer acts as both an ATP-dependent DNA helicase and an ATP-dependent, dual-direction single-stranded exonuclease. Recognizes the chi site generating a DNA molecule suitable for the initiation of homologous recombination. The AddA nuclease domain is required for chi fragment generation; this subunit has the helicase and 3' -&gt; 5' nuclease activities. This is ATP-dependent helicase/nuclease subunit A from Staphylococcus saprophyticus subsp. saprophyticus (strain ATCC 15305 / DSM 20229 / NCIMB 8711 / NCTC 7292 / S-41).